Here is a 138-residue protein sequence, read N- to C-terminus: Basic phospholipase A2 PLA-N (138 aa).

The N-terminal stretch at 1–16 (MRTLWIMAVLLVGVEG) is a signal peptide. 7 disulfides stabilise this stretch: Cys42–Cys131, Cys44–Cys60, Cys59–Cys111, Cys65–Cys138, Cys66–Cys104, Cys73–Cys97, and Cys91–Cys102. Ca(2+) is bound by residues Tyr43, Gly45, and Gly47. The active site involves His63. Asp64 provides a ligand contact to Ca(2+). The active site involves Asp105.

The protein belongs to the phospholipase A2 family. Group II subfamily. D49 sub-subfamily. The cofactor is Ca(2+). As to expression, expressed by the venom gland.

Its subcellular location is the secreted. It carries out the reaction a 1,2-diacyl-sn-glycero-3-phosphocholine + H2O = a 1-acyl-sn-glycero-3-phosphocholine + a fatty acid + H(+). In terms of biological role, snake venom phospholipase A2 (PLA2) that displays edema-inducing activities, as well as presynaptic neurotoxicity and myotoxicity. PLA2 catalyzes the calcium-dependent hydrolysis of the 2-acyl groups in 3-sn-phosphoglycerides. The polypeptide is Basic phospholipase A2 PLA-N (Protobothrops flavoviridis (Habu)).